Consider the following 635-residue polypeptide: MSASLSEQYEEKVRPCIDLIDSLRALGVEKDLALPAIAVIGDQSSGKSSVLEALSGVALPRGSGIVTRCPLELKMKRSREEDFWHGKIKYKKDHDEDYEEEIQNPADVEKKIREAQDHMAGVGVGISDELISLEVTSADVPDLTLIDLPGIARVAVKGQPENIGEQIKRLIKKFITKQETINLVVVPSNVDIATTEALKMAQEVDPNGERTLGILTKPDLVDKGTEETVVSIIHNEIIYLTKGYMIVRCRGQKEIMDRVSLHEATEKEKDFFKDHPHFSTLYEEGMATIPNLAEKLTLELVHHIELSLPRLEEQIDIKLADSQAELDRYGSGPPTEPAERICFLIDKVTAFTQDTINLTTGEELKNIQHLNIFSSLRRQFALWKMHLDDSGETFKSRIEKEVNEYEEKYRGRELPGFINYKTFEVIVKDQIKQLEEPAIRRLKEISDLIRKGFIQLAQNSFLGFPNLLKMAKTKIECIKQVKESEAETMLRTQFKMELIIYTQDSMYSDTLSTLKVKEEEGERQKVGILPNSYSISCSLYNHSNNRATLEELMRHLKSYYSIASKRLADQLPLVIRYLLLQESAAQLQREMLQLMQDKNAIDHLLKEDHDIGNKRNNLQSRQKRLMEARNYLVKF.

In terms of domain architecture, Dynamin-type G spans 31-309 (DLALPAIAVI…LVHHIELSLP (279 aa)). The segment at 41–48 (GDQSSGKS) is G1 motif. GTP is bound at residue 41-48 (GDQSSGKS). Positions 66–68 (VTR) are G2 motif. The tract at residues 147 to 150 (DLPG) is G3 motif. GTP-binding positions include 147–151 (DLPGI) and 216–219 (TKPD). The G4 motif stretch occupies residues 216-219 (TKPD). The interval 248-251 (RCRG) is G5 motif. Positions 549-635 (LEELMRHLKS…MEARNYLVKF (87 aa)) constitute a GED domain.

Belongs to the TRAFAC class dynamin-like GTPase superfamily. Dynamin/Fzo/YdjA family.

It localises to the cytoplasm. The polypeptide is Interferon-induced GTP-binding protein Mx1 (mx1) (Ictalurus punctatus (Channel catfish)).